Here is a 257-residue protein sequence, read N- to C-terminus: Phosphate import ATP-binding protein PstB (257 aa).

The region spanning 11–252 (IQVRDLNFYY…PAKKQTEDYI (242 aa)) is the ABC transporter domain. 43–50 (GPSGSGKS) lines the ATP pocket.

The protein belongs to the ABC transporter superfamily. Phosphate importer (TC 3.A.1.7) family. In terms of assembly, the complex is composed of two ATP-binding proteins (PstB), two transmembrane proteins (PstC and PstA) and a solute-binding protein (PstS).

It is found in the cell inner membrane. The enzyme catalyses phosphate(out) + ATP + H2O = ADP + 2 phosphate(in) + H(+). Part of the ABC transporter complex PstSACB involved in phosphate import. Responsible for energy coupling to the transport system. The sequence is that of Phosphate import ATP-binding protein PstB from Salmonella choleraesuis (strain SC-B67).